The sequence spans 151 residues: Protein ripply1 (151 aa).

A WRPW motif motif is present at residues 57 to 60; the sequence is WRPW. The segment at 96 to 131 is ripply homology domain; it reads HPVRLFWPKSRSFDYLYSAGEILLQNFPVQATINLY. Residues 130–151 form a disordered region; the sequence is LYEDSDSEEEEEDEEQEDEEEK. Acidic residues predominate over residues 132 to 151; that stretch reads EDSDSEEEEEDEEQEDEEEK.

This sequence belongs to the ripply family.

It localises to the nucleus. Its function is as follows. Plays a role in somitogenesis. Essential for transcriptional repression of the segmental patterning genes, thus terminating the segmentation program in the presomitic mesoderm, and also required for the maintenance of rostrocaudal polarity in somites. The chain is Protein ripply1 from Homo sapiens (Human).